We begin with the raw amino-acid sequence, 205 residues long: HTH-type transcriptional regulator PksA (205 aa).

An HTH tetR-type domain is found at 8–68; it reads EKRRKQIAEA…FAMKLVQEKV (61 aa). The segment at residues 31–50 is a DNA-binding region (H-T-H motif); sequence SARNIAKEAGLSLGALRHYF.

Transcriptional regulation of the polyketide synthase operon. This Bacillus subtilis (strain 168) protein is HTH-type transcriptional regulator PksA (pksA).